Consider the following 116-residue polypeptide: Putative transmembrane protein ORF116 (116 aa).

A run of 3 helical transmembrane segments spans residues 20–40, 53–73, and 76–96; these read IVTLSVGIALLVLANAFAYAL, LLGGIVLLVLSMLLTLSTNSI, and FRGAFTFAIGEIIIGGLDVIN.

It is found in the host membrane. This chain is Putative transmembrane protein ORF116, found in Acidianus bottle-shaped virus (isolate Italy/Pozzuoli) (ABV).